A 328-amino-acid chain; its full sequence is 17-beta-hydroxysteroid dehydrogenase type 1 (328 aa).

Residues 10–38 (GCSS…ATLR) and D66 each bind NADP(+). Phosphoserine; by PKA is present on S135. Residue S143 coordinates substrate. Y156 functions as the Proton acceptor in the catalytic mechanism. K160 is a binding site for NADP(+). Positions 291-328 (KAEAGAEAGGGAGPGAEDEAGRGAVGDPELGDPPAAPQ) are disordered.

The protein belongs to the short-chain dehydrogenases/reductases (SDR) family. Homodimer. Exists predominantly as a homodimer but also exits as monomer.

It is found in the cytoplasm. The catalysed reaction is 17beta-estradiol + NAD(+) = estrone + NADH + H(+). It catalyses the reaction 17beta-estradiol + NADP(+) = estrone + NADPH + H(+). It carries out the reaction testosterone + NADP(+) = androst-4-ene-3,17-dione + NADPH + H(+). The protein operates within steroid biosynthesis; estrogen biosynthesis. Favors the reduction of estrogens and androgens. Converts estrone (E1) to a more potent estrogen, 17beta-estradiol (E2). Also has 20-alpha-HSD activity. Uses preferentially NADH. This chain is 17-beta-hydroxysteroid dehydrogenase type 1, found in Homo sapiens (Human).